The primary structure comprises 274 residues: 2-dehydro-3-deoxyphosphooctonate aldolase (274 aa).

It belongs to the KdsA family.

Its subcellular location is the cytoplasm. It catalyses the reaction D-arabinose 5-phosphate + phosphoenolpyruvate + H2O = 3-deoxy-alpha-D-manno-2-octulosonate-8-phosphate + phosphate. The protein operates within carbohydrate biosynthesis; 3-deoxy-D-manno-octulosonate biosynthesis; 3-deoxy-D-manno-octulosonate from D-ribulose 5-phosphate: step 2/3. It participates in bacterial outer membrane biogenesis; lipopolysaccharide biosynthesis. This Rickettsia peacockii (strain Rustic) protein is 2-dehydro-3-deoxyphosphooctonate aldolase.